Reading from the N-terminus, the 262-residue chain is Phosphatidylglycerol--prolipoprotein diacylglyceryl transferase (262 aa).

A run of 4 helical transmembrane segments spans residues 9 to 29 (LGPL…ILAV), 41 to 61 (IIPD…ILGA), 80 to 100 (IFAI…GALV), and 109 to 129 (LINT…AQSL). Arginine 131 is an a 1,2-diacyl-sn-glycero-3-phospho-(1'-sn-glycerol) binding site. A run of 3 helical transmembrane segments spans residues 167-187 (QPTF…ILIF), 197-217 (GHIT…IEGM), and 226-246 (GLRV…MIVI).

Belongs to the Lgt family.

It localises to the cell membrane. The catalysed reaction is L-cysteinyl-[prolipoprotein] + a 1,2-diacyl-sn-glycero-3-phospho-(1'-sn-glycerol) = an S-1,2-diacyl-sn-glyceryl-L-cysteinyl-[prolipoprotein] + sn-glycerol 1-phosphate + H(+). It functions in the pathway protein modification; lipoprotein biosynthesis (diacylglyceryl transfer). Functionally, catalyzes the transfer of the diacylglyceryl group from phosphatidylglycerol to the sulfhydryl group of the N-terminal cysteine of a prolipoprotein, the first step in the formation of mature lipoproteins. In Streptococcus pneumoniae (strain P1031), this protein is Phosphatidylglycerol--prolipoprotein diacylglyceryl transferase.